We begin with the raw amino-acid sequence, 80 residues long: UPF0248 protein MJ1316 (80 aa).

This sequence belongs to the UPF0248 family.

The chain is UPF0248 protein MJ1316 from Methanocaldococcus jannaschii (strain ATCC 43067 / DSM 2661 / JAL-1 / JCM 10045 / NBRC 100440) (Methanococcus jannaschii).